Reading from the N-terminus, the 240-residue chain is ATP-dependent dethiobiotin synthetase BioD 1 (240 aa).

Asp-13 to Val-18 contacts ATP. Thr-17 provides a ligand contact to Mg(2+). Lys-38 is an active-site residue. Ser-42 contributes to the substrate binding site. Residues Asp-55, Glu-116–Gly-119, Asn-176–Glu-177, Pro-205–Leu-207, and Glu-212 contribute to the ATP site. Asp-55 and Glu-116 together coordinate Mg(2+).

This sequence belongs to the dethiobiotin synthetase family. In terms of assembly, homodimer. Requires Mg(2+) as cofactor.

The protein localises to the cytoplasm. It catalyses the reaction (7R,8S)-7,8-diammoniononanoate + CO2 + ATP = (4R,5S)-dethiobiotin + ADP + phosphate + 3 H(+). The protein operates within cofactor biosynthesis; biotin biosynthesis; biotin from 7,8-diaminononanoate: step 1/2. Functionally, catalyzes a mechanistically unusual reaction, the ATP-dependent insertion of CO2 between the N7 and N8 nitrogen atoms of 7,8-diaminopelargonic acid (DAPA, also called 7,8-diammoniononanoate) to form a ureido ring. This is ATP-dependent dethiobiotin synthetase BioD 1 from Yersinia pestis.